Reading from the N-terminus, the 551-residue chain is MFS efflux transporter aclA (551 aa).

8 helical membrane-spanning segments follow: residues 26-46 (WAVF…ITAI), 64-84 (VWIA…IGQI), 93-113 (PMII…GATS), 125-145 (GLGA…LVPL), 154-174 (IALS…GALV), 181-201 (WVFY…VLCL), 220-240 (WVGN…LVIG), and 251-271 (VLVP…FEAS). N-linked (GlcNAc...) asparagine glycosylation occurs at Asn-286. The next 6 helical transmembrane spans lie at 294 to 314 (VLAF…TLFF), 327 to 347 (VDVI…GAIM), 356 to 376 (LHWA…TWDA), 385 to 405 (ILQC…LPAI), 420 to 440 (AYAF…AVVF), and 492 to 512 (LRTV…LVVV).

This sequence belongs to the major facilitator superfamily.

The protein localises to the membrane. In terms of biological role, MFS efflux transporter; part of the gene cluster that mediates the biosynthesis of aspirochlorine (or antibiotic A30641), an unusual halogenated spiro compound with distinctive antifungal properties due to selective inhibition of protein biosynthesis, and which is also active against bacteria, viruses, and murine tumor cells. The sequence is that of MFS efflux transporter aclA from Aspergillus oryzae (strain ATCC 42149 / RIB 40) (Yellow koji mold).